Reading from the N-terminus, the 1728-residue chain is Lysophospholipase NTE1 (1728 aa).

Residues 1 to 44 are Cytoplasmic-facing; it reads MDSSSIAHESDIVSTERNILPERFISNKQQGNYLEDGSGDGNGK. A helical transmembrane segment spans residues 45–65; it reads AAEHWLLAAIFNFFWVISYFI. Residues 66 to 97 lie on the Lumenal side of the membrane; sequence SGSTHIAFRSSWYIVSLLLLKFPKWIIVEANH. The helical transmembrane segment at 98–118 threads the bilayer; sequence IHLTIPFSVLVVTLAIIFYVS. The Cytoplasmic portion of the chain corresponds to 119–1728; that stretch reads YEFLKGRLLS…GFFLHRRNSI (1610 aa). Residues 141-150 are compositionally biased toward low complexity; the sequence is SLNSKNSKSS. 6 disordered regions span residues 141–167, 285–368, 406–436, 454–488, 596–660, and 687–756; these read SLNS…RRRR, RKKK…DEST, NDNV…LSTS, TEAS…VTTP, NLQK…TGSR, and ASPS…FTSF. Residues 153–162 are compositionally biased toward basic and acidic residues; sequence LHHDSKDSNT. 2 stretches are compositionally biased toward polar residues: residues 293-303 and 326-336; these read SRHGQYNNNSD and MRSSSRNQNIP. Acidic residues predominate over residues 345–367; the sequence is SSDEESDINDGDSESQSESDDES. 3 stretches are compositionally biased toward polar residues: residues 406 to 424, 454 to 479, and 599 to 609; these read NDNV…NYTN, TEAS…SKSI, and KGFQSPTSSRL. The segment covering 610-628 has biased composition (low complexity); the sequence is TSNFNGNSNNQRTNSRNSQ. 2 stretches are compositionally biased toward polar residues: residues 642 to 657 and 729 to 756; these read ELSQ…TPIT and IYNN…FTSF. Residues 854 to 987 and 983 to 1121 contribute to the a nucleoside 3',5'-cyclic phosphate site; these read SPTL…LTSL and SLTS…VAKK. The disordered stretch occupies residues 1034-1055; the sequence is PELEENSTDYPNDGEEKDSSRD. Residues 1036-1049 are compositionally biased toward acidic residues; that stretch reads LEENSTDYPNDGEE. The region spanning 1422–1586 is the PNPLA domain; it reads LVLGGGGARG…VDNLPVLEMK (165 aa). The GXGXXG signature appears at 1426–1431; that stretch reads GGGARG. The GXSXG motif lies at 1453-1457; that stretch reads GTSIG. The Nucleophile role is filled by serine 1455. The active-site Proton acceptor is aspartate 1573. The DGA/G motif lies at 1573 to 1575; that stretch reads DGG.

It belongs to the NTE family.

The protein resides in the endoplasmic reticulum membrane. It carries out the reaction a 1-acyl-sn-glycero-3-phosphocholine + H2O = sn-glycerol 3-phosphocholine + a fatty acid + H(+). Its activity is regulated as follows. Inhibited by organophosphorus esters. Functionally, intracellular phospholipase B that catalyzes the double deacylation of phosphatidylcholine (PC) to glycerophosphocholine (GroPCho). Plays an important role in membrane lipid homeostasis. Responsible for the rapid PC turnover in response to inositol, elevated temperatures, or when choline is present in the growth medium. The chain is Lysophospholipase NTE1 (NTE1) from Candida glabrata (strain ATCC 2001 / BCRC 20586 / JCM 3761 / NBRC 0622 / NRRL Y-65 / CBS 138) (Yeast).